The sequence spans 383 residues: Cyclin-D4-2 (383 aa).

Residues 51 to 62 are compositionally biased toward gly residues; sequence AAGGGGGSGGGG. Disordered stretches follow at residues 51–70, 313–335, and 354–383; these read AAGG…EDMF, QPKP…PESP, and ATIA…KLSR. Low complexity predominate over residues 323-335; sequence SASASSSSVPESP.

Belongs to the cyclin family. Cyclin D subfamily.

In Oryza sativa subsp. japonica (Rice), this protein is Cyclin-D4-2 (CYCD4-2).